The sequence spans 670 residues: MAVATQSLEELSINAIRFLAVDAIEKAKSGHPGLPMGAAPMAFVLWNRFMRYNPKNPKWFNRDRFVLSAGHGSMLQYALLYLTGYDSVSIEDIKQFRQWESKTPGHPENFMTAGVEVTTGPLGQGIANGVGLAIAEAHLAAKFNKPDAKIVDHYTYVILGDGCNMEGVSGEAASFAGHLGLGKLIALYDDNHISIDGSTDVAFTEDVSKRFESYGWHVIHVKDGNTDLEAIHKAIEEAKAVTDKPTMIKVTTIIGYGSPNKSNTAGVHGAALGGDEVALTRQNLGWSHDPFVVPEDVLNYTRKAVERGAGYESDWNKTYADYKAKYPQEAAEFERYLSGKLADGWDKVLPSYTPEDKGLPTRKHSETCLNKLAAVLPELIGGSADLTHSNLTEIKGKGDFQKGQYQNPNIHFGVREHGMGAICNGIALHGSGLIPYGATFLIFSDYMRAPIRLSALSQAGSIWVMTHDSIGQGEDGPTHQPIETLASLRAIPNLTVIRPADGNETSGAYKVAIERAKNNAPTLLAFTRQNVPNLAGTSIDDVAKGGYIVVDTDGTPDLILIGTGSELSLCVTAAEKLKAEGKKVRVVSLAAWDLFDAQDAAYKESVLPKAVTKRLAVEAASSFGWHKYIGSEGDAVTIDRFGASAPGGVCLEKFGFSVDNVLAKAKQLLG.

Substrate is bound at residue His-31. Thiamine diphosphate-binding positions include His-71 and 120–122 (GPL). Residue Asp-161 participates in Mg(2+) binding. The thiamine diphosphate site is built by Gly-162 and Asn-191. 2 residues coordinate Mg(2+): Asn-191 and Ile-193. Residues His-268, Arg-362, and Ser-389 each contribute to the substrate site. His-268 is a binding site for thiamine diphosphate. Glu-416 acts as the Proton donor in catalysis. Position 443 (Phe-443) interacts with thiamine diphosphate. Residues His-467, Asp-475, and Arg-528 each coordinate substrate.

As to quaternary structure, homodimer. Mg(2+) is required as a cofactor. Requires Ca(2+) as cofactor. It depends on Mn(2+) as a cofactor. Co(2+) serves as cofactor. The cofactor is thiamine diphosphate.

It carries out the reaction D-sedoheptulose 7-phosphate + D-glyceraldehyde 3-phosphate = aldehydo-D-ribose 5-phosphate + D-xylulose 5-phosphate. Its function is as follows. Catalyzes the transfer of a two-carbon ketol group from a ketose donor to an aldose acceptor, via a covalent intermediate with the cofactor thiamine pyrophosphate. The chain is Transketolase (tkt) from Nostoc sp. (strain PCC 7120 / SAG 25.82 / UTEX 2576).